A 313-amino-acid chain; its full sequence is Holliday junction branch migration complex subunit RuvB (313 aa).

Residues 1–157 (MNEYIGQGNI…FGLIMELDFY (157 aa)) are large ATPase domain (RuvB-L). ATP contacts are provided by residues glycine 38, lysine 41, threonine 42, threonine 43, 104–106 (EDF), arginine 147, tyrosine 157, and arginine 194. Threonine 42 contacts Mg(2+). A small ATPAse domain (RuvB-S) region spans residues 158 to 228 (SIDELSKIIE…MVEEIMFLLG (71 aa)). A head domain (RuvB-H) region spans residues 231-313 (KEGLDELDRK…KVQRGLFDEE (83 aa)). Arginine 286 and arginine 291 together coordinate DNA.

It belongs to the RuvB family. As to quaternary structure, homohexamer. Forms an RuvA(8)-RuvB(12)-Holliday junction (HJ) complex. HJ DNA is sandwiched between 2 RuvA tetramers; dsDNA enters through RuvA and exits via RuvB. An RuvB hexamer assembles on each DNA strand where it exits the tetramer. Each RuvB hexamer is contacted by two RuvA subunits (via domain III) on 2 adjacent RuvB subunits; this complex drives branch migration. In the full resolvosome a probable DNA-RuvA(4)-RuvB(12)-RuvC(2) complex forms which resolves the HJ.

The protein localises to the cytoplasm. It catalyses the reaction ATP + H2O = ADP + phosphate + H(+). Its function is as follows. The RuvA-RuvB-RuvC complex processes Holliday junction (HJ) DNA during genetic recombination and DNA repair, while the RuvA-RuvB complex plays an important role in the rescue of blocked DNA replication forks via replication fork reversal (RFR). RuvA specifically binds to HJ cruciform DNA, conferring on it an open structure. The RuvB hexamer acts as an ATP-dependent pump, pulling dsDNA into and through the RuvAB complex. RuvB forms 2 homohexamers on either side of HJ DNA bound by 1 or 2 RuvA tetramers; 4 subunits per hexamer contact DNA at a time. Coordinated motions by a converter formed by DNA-disengaged RuvB subunits stimulates ATP hydrolysis and nucleotide exchange. Immobilization of the converter enables RuvB to convert the ATP-contained energy into a lever motion, pulling 2 nucleotides of DNA out of the RuvA tetramer per ATP hydrolyzed, thus driving DNA branch migration. The RuvB motors rotate together with the DNA substrate, which together with the progressing nucleotide cycle form the mechanistic basis for DNA recombination by continuous HJ branch migration. Branch migration allows RuvC to scan DNA until it finds its consensus sequence, where it cleaves and resolves cruciform DNA. This Thermosipho melanesiensis (strain DSM 12029 / CIP 104789 / BI429) protein is Holliday junction branch migration complex subunit RuvB.